A 297-amino-acid polypeptide reads, in one-letter code: Homoserine kinase (297 aa).

An ATP-binding site is contributed by 82–92 (PVSRGLGSSAA).

The protein belongs to the GHMP kinase family. Homoserine kinase subfamily.

It is found in the cytoplasm. It catalyses the reaction L-homoserine + ATP = O-phospho-L-homoserine + ADP + H(+). It functions in the pathway amino-acid biosynthesis; L-threonine biosynthesis; L-threonine from L-aspartate: step 4/5. Its function is as follows. Catalyzes the ATP-dependent phosphorylation of L-homoserine to L-homoserine phosphate. The protein is Homoserine kinase of Clostridium botulinum (strain Langeland / NCTC 10281 / Type F).